A 92-amino-acid polypeptide reads, in one-letter code: RIIa domain-containing protein 1 (92 aa).

The 35-residue stretch at 43 to 77 (KEVELLISGFFREMFLKRPDNIPEFAADYFTDPRL) folds into the RIIa domain.

The protein is RIIa domain-containing protein 1 (RIIAD1) of Bos taurus (Bovine).